The primary structure comprises 81 residues: Small ribosomal subunit protein bS16 (81 aa).

The protein belongs to the bacterial ribosomal protein bS16 family.

The polypeptide is Small ribosomal subunit protein bS16 (Colwellia psychrerythraea (strain 34H / ATCC BAA-681) (Vibrio psychroerythus)).